Here is a 71-residue protein sequence, read N- to C-terminus: Translation initiation factor IF-1 (71 aa).

Residues 1–71 (MAKQSAIEQD…LSKARITYRY (71 aa)) enclose the S1-like domain.

It belongs to the IF-1 family. In terms of assembly, component of the 30S ribosomal translation pre-initiation complex which assembles on the 30S ribosome in the order IF-2 and IF-3, IF-1 and N-formylmethionyl-tRNA(fMet); mRNA recruitment can occur at any time during PIC assembly.

The protein resides in the cytoplasm. Its function is as follows. One of the essential components for the initiation of protein synthesis. Stabilizes the binding of IF-2 and IF-3 on the 30S subunit to which N-formylmethionyl-tRNA(fMet) subsequently binds. Helps modulate mRNA selection, yielding the 30S pre-initiation complex (PIC). Upon addition of the 50S ribosomal subunit IF-1, IF-2 and IF-3 are released leaving the mature 70S translation initiation complex. In Flavobacterium johnsoniae (strain ATCC 17061 / DSM 2064 / JCM 8514 / BCRC 14874 / CCUG 350202 / NBRC 14942 / NCIMB 11054 / UW101) (Cytophaga johnsonae), this protein is Translation initiation factor IF-1.